Reading from the N-terminus, the 321-residue chain is Phosphopantothenate--cysteine ligase 1 (321 aa).

Belongs to the PPC synthetase family. Homodimer.

The enzyme catalyses (R)-4'-phosphopantothenate + L-cysteine + CTP = N-[(R)-4-phosphopantothenoyl]-L-cysteine + CMP + diphosphate + H(+). It participates in cofactor biosynthesis; coenzyme A biosynthesis; CoA from (R)-pantothenate: step 2/5. In terms of biological role, catalyzes the first step in the biosynthesis of coenzyme A from vitamin B5, where cysteine is conjugated to 4'-phosphopantothenate to form 4-phosphopantothenoylcysteine. The chain is Phosphopantothenate--cysteine ligase 1 from Oryza sativa subsp. japonica (Rice).